We begin with the raw amino-acid sequence, 353 residues long: Draxin-B (353 aa).

An N-terminal signal peptide occupies residues 1 to 21 (MASSWCLPLALLVSNLAVSHS). Disordered regions lie at residues 23–183 (EPSS…KEGS), 198–222 (TVMS…RGKV), and 246–268 (VDAW…SGNV). Residues 138 to 167 (GPHKGKAQGHGHHFDHRRHGGRRDKGRHTK) show a composition bias toward basic residues. Residues 252-261 (SRKKDKRRSK) are compositionally biased toward basic residues. N-linked (GlcNAc...) asparagine glycans are attached at residues Asn262 and Asn267.

This sequence belongs to the draxin family.

It is found in the secreted. Chemorepulsive axon guidance protein required for the development of spinal cord and forebrain commissures. Acts as a chemorepulsive guidance protein for commissural axons during development. Able to inhibit or repel neurite outgrowth from dorsal spinal cord. In Salmo salar (Atlantic salmon), this protein is Draxin-B (draxin-B).